Here is a 233-residue protein sequence, read N- to C-terminus: Small ribosomal subunit protein uS3 (233 aa).

The KH type-2 domain maps to 39-107; the sequence is VRQYLNKELA…PAQINIAEVR (69 aa).

The protein belongs to the universal ribosomal protein uS3 family. Part of the 30S ribosomal subunit. Forms a tight complex with proteins S10 and S14.

Functionally, binds the lower part of the 30S subunit head. Binds mRNA in the 70S ribosome, positioning it for translation. This chain is Small ribosomal subunit protein uS3, found in Cronobacter sakazakii (strain ATCC BAA-894) (Enterobacter sakazakii).